The sequence spans 95 residues: Aspartyl/glutamyl-tRNA(Asn/Gln) amidotransferase subunit C (95 aa).

The protein belongs to the GatC family. As to quaternary structure, heterotrimer of A, B and C subunits.

The catalysed reaction is L-glutamyl-tRNA(Gln) + L-glutamine + ATP + H2O = L-glutaminyl-tRNA(Gln) + L-glutamate + ADP + phosphate + H(+). It carries out the reaction L-aspartyl-tRNA(Asn) + L-glutamine + ATP + H2O = L-asparaginyl-tRNA(Asn) + L-glutamate + ADP + phosphate + 2 H(+). In terms of biological role, allows the formation of correctly charged Asn-tRNA(Asn) or Gln-tRNA(Gln) through the transamidation of misacylated Asp-tRNA(Asn) or Glu-tRNA(Gln) in organisms which lack either or both of asparaginyl-tRNA or glutaminyl-tRNA synthetases. The reaction takes place in the presence of glutamine and ATP through an activated phospho-Asp-tRNA(Asn) or phospho-Glu-tRNA(Gln). The polypeptide is Aspartyl/glutamyl-tRNA(Asn/Gln) amidotransferase subunit C (Rhizobium leguminosarum bv. trifolii (strain WSM2304)).